The primary structure comprises 369 residues: MLFPKRLIVWGVLLILSLSQFVLYLPATTCTNSKGLRLCAPQFTITVIGGSSTANEFIASVREFLRLISYLTIDMGWSNEFTDPSVYEDENLVDTFQPDKVFELNYFGFCKRSNKSKVYCTSNENYGMDVLEVLVRDVGIQLGNISTTRSNETKKFGDSLVLTYRLALTSIRDFLKHDKHTGNALSKALIGSPDPNVKGVSPTKNYLKGVNLAFILMMFNGMVFYFAVLEIIVGFLSICVVSAFGGALSVGKRHRLFPMLLKSSSSILVVIATLTILCNIVYLIALKTLEPEEVTDVGSDNAAVHTTGWELLKVNVGSGFIMGLARYAIQWVLLVLAFLAANHYKAKPKKSDKYTEDTSNSPSPDLMEK.

Residues M1 to R6 are Cytoplasmic-facing. Residues L7–A27 traverse the membrane as a helical segment. Residues T28 to N220 are Lumenal-facing. A helical transmembrane segment spans residues G221–V241. Topologically, residues S242–S265 are cytoplasmic. A helical transmembrane segment spans residues S266–L286. The Lumenal portion of the chain corresponds to K287–G319. The chain crosses the membrane as a helical span at residues F320–A340. The Cytoplasmic segment spans residues A341–K369. A disordered region spans residues P348 to K369.

The protein belongs to the SMA2 family.

Its subcellular location is the prospore membrane. It localises to the endoplasmic reticulum. Its function is as follows. Involved in spore and ascus formation. Required for the efficient assembly of the precursors of the prospore membrane to a continuous prospore membrane. The chain is Spore membrane assembly protein 2 (SMA2) from Saccharomyces cerevisiae (strain ATCC 204508 / S288c) (Baker's yeast).